The primary structure comprises 354 residues: tRNA N6-adenosine threonylcarbamoyltransferase (354 aa).

Positions 121, 125, and 142 each coordinate a divalent metal cation. Residues 142-146, aspartate 174, glycine 189, glutamate 193, and asparagine 285 contribute to the substrate site; that span reads YVSGG. Position 313 (aspartate 313) interacts with a divalent metal cation.

This sequence belongs to the KAE1 / TsaD family. As to quaternary structure, component of the EKC/KEOPS complex composed of at least bud32, cgi121, gon7, kae1 and pcc1; the whole complex dimerizes. The cofactor is a divalent metal cation.

The protein resides in the cytoplasm. The protein localises to the nucleus. The enzyme catalyses L-threonylcarbamoyladenylate + adenosine(37) in tRNA = N(6)-L-threonylcarbamoyladenosine(37) in tRNA + AMP + H(+). Its function is as follows. Component of the EKC/KEOPS complex that is required for the formation of a threonylcarbamoyl group on adenosine at position 37 (t(6)A37) in tRNAs that read codons beginning with adenine. The complex is probably involved in the transfer of the threonylcarbamoyl moiety of threonylcarbamoyl-AMP (TC-AMP) to the N6 group of A37. Kae1 likely plays a direct catalytic role in this reaction, but requires other protein(s) of the complex to fulfill this activity. The EKC/KEOPS complex also promotes both telomere uncapping and telomere elongation. The complex is required for efficient recruitment of transcriptional coactivators. The chain is tRNA N6-adenosine threonylcarbamoyltransferase (gpe-1) from Neurospora crassa (strain ATCC 24698 / 74-OR23-1A / CBS 708.71 / DSM 1257 / FGSC 987).